The chain runs to 199 residues: Probable GTP-binding protein EngB (199 aa).

One can recognise an EngB-type G domain in the interval 28-199; that stretch reads DLPEIALAGR…ESWDTILEYL (172 aa). GTP contacts are provided by residues 36-43, 63-67, 81-84, 148-151, and 180-182; these read GRSNVGKS, GKTQL, DVPG, TKAD, and FSS. Positions 43 and 65 each coordinate Mg(2+).

Belongs to the TRAFAC class TrmE-Era-EngA-EngB-Septin-like GTPase superfamily. EngB GTPase family. Requires Mg(2+) as cofactor.

Its function is as follows. Necessary for normal cell division and for the maintenance of normal septation. This Streptococcus equi subsp. zooepidemicus (strain H70) protein is Probable GTP-binding protein EngB.